We begin with the raw amino-acid sequence, 237 residues long: Deoxyribose-phosphate aldolase (237 aa).

The active-site Proton donor/acceptor is Asp-94. The active-site Schiff-base intermediate with acetaldehyde is the Lys-158. Catalysis depends on Lys-187, which acts as the Proton donor/acceptor.

It belongs to the DeoC/FbaB aldolase family. DeoC type 1 subfamily.

The protein resides in the cytoplasm. It catalyses the reaction 2-deoxy-D-ribose 5-phosphate = D-glyceraldehyde 3-phosphate + acetaldehyde. It functions in the pathway carbohydrate degradation; 2-deoxy-D-ribose 1-phosphate degradation; D-glyceraldehyde 3-phosphate and acetaldehyde from 2-deoxy-alpha-D-ribose 1-phosphate: step 2/2. Functionally, catalyzes a reversible aldol reaction between acetaldehyde and D-glyceraldehyde 3-phosphate to generate 2-deoxy-D-ribose 5-phosphate. This chain is Deoxyribose-phosphate aldolase, found in Lactobacillus acidophilus (strain ATCC 700396 / NCK56 / N2 / NCFM).